We begin with the raw amino-acid sequence, 196 residues long: Elongation factor Ts (196 aa).

The involved in Mg(2+) ion dislocation from EF-Tu stretch occupies residues 80–83 (TDFV).

The protein belongs to the EF-Ts family.

It is found in the cytoplasm. Its function is as follows. Associates with the EF-Tu.GDP complex and induces the exchange of GDP to GTP. It remains bound to the aminoacyl-tRNA.EF-Tu.GTP complex up to the GTP hydrolysis stage on the ribosome. The protein is Elongation factor Ts of Desulfotalea psychrophila (strain LSv54 / DSM 12343).